The sequence spans 197 residues: RILP-like protein 2 (197 aa).

The disordered stretch occupies residues 1–24 (MEDHPVREEEDGEEDEGALAKSPL). Over residues 8–17 (EEEDGEEDEG) the composition is skewed to acidic residues. The RH1 domain maps to 14–96 (EDEGALAKSP…KQEVEGLRKA (83 aa)). Residues 69-153 (VNEGSLAVEE…VQEELQCYRS (85 aa)) are a coiled coil. Residues 119–184 (RPRFTLQELR…GNGEKEERTI (66 aa)) enclose the RH2 domain.

Belongs to the RILPL family. Homodimer. Interacts with RAC1. Interacts (via N-terminus) with MYO5A, the interaction is required for its role in dendrite formation. Interacts with RAB8A; interaction is dependent on the phosphorylation of RAB8A on 'Thr-72'. Interacts with RAB10 and RAB12; interaction is dependent on the phosphorylation of 'Thr-73' on RAB10 and 'Ser-105' on RAB12.

The protein resides in the cytoplasm. The protein localises to the cytosol. It localises to the cytoskeleton. It is found in the microtubule organizing center. Its subcellular location is the centrosome. The protein resides in the cell projection. The protein localises to the cilium. Functionally, involved in cell shape and neuronal morphogenesis, positively regulating the establishment and maintenance of dendritic spines. Plays a role in cellular protein transport, including protein transport away from primary cilia. May function via activation of RAC1 and PAK1. This chain is RILP-like protein 2 (Rilpl2), found in Mus musculus (Mouse).